The following is a 285-amino-acid chain: MRVLVISGLSGSGKSTAVRVLEDEGFFCIDNLPVQLFPTIIDLVNKAQETVPGVALVMDIRGRDFLKGFEKIFQEIDDAGHTIEIIFFDATDEVLIRRFSETRRRHPALESGSVPEGIRYEREQLSGLRRLATLVIDTSELNVHQLKEMVLARVKGEAGARRMTIHLQSFGYRYGIPLESDLVMDVRFLSNPHFVPELKPLSGLDPGVRNFVLEKPETTQFLARFEGLLEYLLPAYQREGKSYLTISIGCTGGRHRSVALVEELRRFFDRAGIAVKVSHRDMEKG.

ATP is bound at residue 8–15 (GLSGSGKS). 59–62 (DIRG) contributes to the GTP binding site.

This sequence belongs to the RapZ-like family.

Its function is as follows. Displays ATPase and GTPase activities. The chain is Nucleotide-binding protein Gmet_1286 from Geobacter metallireducens (strain ATCC 53774 / DSM 7210 / GS-15).